A 378-amino-acid chain; its full sequence is Cytochrome b (378 aa).

A run of 4 helical transmembrane segments spans residues 34-54 (FGSLLGLCLVIQILSGLFLSM), 78-100 (WLLRSIHANGASFFFMCLYCHIG), 113-133 (TWNVGVVIFFLTMGTAFVGYV), and 179-199 (FFSFHFLFPFMIAGLSMVHLL). Positions 84 and 98 each coordinate heme b. 2 residues coordinate heme b: H183 and H197. H202 contacts a ubiquinone. 4 helical membrane passes run 225-245 (YSTKDIAGFLVFFFVFFIVVL), 289-306 (LGGVVSLVASIAILFCLP), 313-342 (KFRSLVFYPLNQILFWSFCSIFLLLTWIGM), and 350-369 (IFIGQILTVLYFSYFLLNPL).

It belongs to the cytochrome b family. In terms of assembly, the main subunits of complex b-c1 are: cytochrome b, cytochrome c1 and the Rieske protein. Heme b serves as cofactor.

It localises to the mitochondrion inner membrane. Component of the ubiquinol-cytochrome c reductase complex (complex III or cytochrome b-c1 complex) that is part of the mitochondrial respiratory chain. The b-c1 complex mediates electron transfer from ubiquinol to cytochrome c. Contributes to the generation of a proton gradient across the mitochondrial membrane that is then used for ATP synthesis. The polypeptide is Cytochrome b (mt:Cyt-b) (Loxocorone allax (Goblet worm)).